The following is a 1136-amino-acid chain: MLCPWQFAFKPHAVKNQSSEEKDINNNVEKDVKVHSFVKDDAKLHSLSKKQMKMSPIITSAEKHPQNGIKASNQISRCPRHVKVRNMENGSSLLDTLHLTAKEVINCRTRACQGALMTPKGLVRSTRDGPVPPAELLPQAVDFVKQYYSSFKELKIEEHLARLETVTKEIETTGTYHLTKDELIFAAKQAWRNAPRCIGRIQWSNLQVFDARDCKTAKEMFEYICRHIQYATNNGNIRSAITIFPQRTDGKHDFRVWNSQLIRYAGYQMPDGSVIGDPASVEFTKLCIELGWKPKYGRFDVVPLILQANGQDPEIFEYPPEIILEVPMEHPKYEWFKELDLKWYALPAVANMLLEVGGLEFTACPFNGWYMGTEIGVRDFCDVQRYNILKEVGRRMGLESNKLASLWKDRAVVEINVAVLHSFQKQNVTIMDHHSAAESFMKYMQNEYRVRGGCPADWVWIVPPMSGSITPVFHQEMLNYVLTPFFYYQVDAWKTHIWHDETRRPKKREIKLSILAKAVLLASLLLQKTMAARPKVTVIYATETGKSETLANSLCSLFSCAFNTKILCMDEYNISDLEKETLLLVVTSTFGNGDSPNNGKTLKNSLLTLKLLRKNIRYAVFGLGSTMYPEFCAFAHAIDQKLSQLGALQLTPVGEGDELNGQEEAFRTWAVTAFKTACDIFDIRGKNSIQLPEIYTSDDSWNPKKHRIVYDSQTMDLTKALSDIHGKNVIPMKLKFRQNLQSLKSSRVTILVKLSCETNQEVHYLPGEHIGISPGNQPELVHGLIARVKDAPPADQTIRLETCTEGGYWASEKKIPACTLSQALTYLLDITTPPTQQLLKKLSQLVTAEGDKQRLEVLCHSTEEYNKWKFYNRPNILEVLEEFPSAEVSTAFLLTQLPLLKPRYYSVSSSCDMTPREIHLTVAVVNYRTRDGQGPLHHGVCSTWLNKIALNETVPCFVRSADGFRLPKEPAKPCILIGPGTGIAPFRSFWQQRLYDLEKKGIKGGDMILLFGCRHPDMDHIYKEEVEEMKRKGVLKEVFTAYSRQPGQPKVYVQDILQNELETKVCNILHKEEGHLYVCGDVRMARDVAQTLKRMLVKKLNHTEQQAEEYFFQLKSQKRYHEDIFGAVFPHEVKRI.

Residues Cys-107 and Cys-112 each coordinate Zn(2+). Cys-197 lines the heme b pocket. 4 residues coordinate L-arginine: Gln-260, Trp-369, Tyr-370, and Glu-374. Residues Arg-378, Val-459, Trp-460, and Phe-473 each coordinate (6R)-L-erythro-5,6,7,8-tetrahydrobiopterin. Tyr-488 contributes to the heme b binding site. Residues 512–532 are calmodulin-binding; it reads LSILAKAVLLASLLLQKTMAA. The 139-residue stretch at 536–674 folds into the Flavodoxin-like domain; that stretch reads VTVIYATETG…AFRTWAVTAF (139 aa). Positions 542, 543, 544, 546, 547, 588, 589, 625, 632, 658, and 662 each coordinate FMN. Residues 727–967 enclose the FAD-binding FR-type domain; it reads KNVIPMKLKF…VRSADGFRLP (241 aa). NADP(+) is bound at residue Arg-747. 10 residues coordinate FAD: His-769, Arg-903, Tyr-905, Ser-906, Thr-921, Ala-923, Tyr-927, Val-940, Cys-941, and Ser-942. Residues Thr-981, Arg-1014, Ser-1043, Arg-1044, Lys-1050, Tyr-1052, Gln-1054, and Asp-1087 each coordinate NADP(+).

It belongs to the NOS family. Homodimer. The cofactor is heme b. Requires FAD as cofactor. FMN is required as a cofactor. It depends on (6R)-L-erythro-5,6,7,8-tetrahydrobiopterin as a cofactor.

The protein localises to the cytoplasm. The protein resides in the cytosol. It carries out the reaction 2 L-arginine + 3 NADPH + 4 O2 + H(+) = 2 L-citrulline + 2 nitric oxide + 3 NADP(+) + 4 H2O. With respect to regulation, not stimulated by calcium/calmodulin. In terms of biological role, produces nitric oxide (NO) which is a messenger molecule with diverse functions throughout the body. NO may serve as both a paracrine and autocrine signal for modulating osteoclast bone resorption. Also has nitrosylase activity and mediates cysteine S-nitrosylation of cytoplasmic target proteins such COX2. This is Nitric oxide synthase, inducible (NOS2) from Gallus gallus (Chicken).